The chain runs to 549 residues: Chaperonin GroEL (549 aa).

ATP contacts are provided by residues 29 to 32 (TAGP), Lys-50, 86 to 90 (DGTTT), Gly-418, and Asp-499.

Belongs to the chaperonin (HSP60) family. As to quaternary structure, forms a cylinder of 14 subunits composed of two heptameric rings stacked back-to-back. Interacts with the co-chaperonin GroES.

It localises to the cytoplasm. It carries out the reaction ATP + H2O + a folded polypeptide = ADP + phosphate + an unfolded polypeptide.. In terms of biological role, together with its co-chaperonin GroES, plays an essential role in assisting protein folding. The GroEL-GroES system forms a nano-cage that allows encapsulation of the non-native substrate proteins and provides a physical environment optimized to promote and accelerate protein folding. The sequence is that of Chaperonin GroEL from Wolbachia pipientis wMel.